The sequence spans 357 residues: P2Y purinoceptor 8 (357 aa).

Over 1 to 26 (MVKNGSHLDAETLAMLQNKAISITLP) the chain is Extracellular. Residue N4 is glycosylated (N-linked (GlcNAc...) asparagine). A helical membrane pass occupies residues 27–47 (VVYTMVAIISIPGNFFSLWVL). Over 48–56 (CWHIKPKTP) the chain is Cytoplasmic. The chain crosses the membrane as a helical span at residues 57 to 77 (SVIFMINLSITDLLLACCFPF). Residues 78–97 (QIFYHIQRNHWIFGKTLCSL) lie on the Extracellular side of the membrane. The cysteines at positions 95 and 174 are disulfide-linked. The helical transmembrane segment at 98-118 (VTVMFYSNMYSSILTMTCISI) threads the bilayer. Over 119–137 (ERYMGVVYPMKLIKWRRKR) the chain is Cytoplasmic. Residues 138–158 (YALGACVIMWIFLLLAFYPLE) form a helical membrane-spanning segment. At 159–185 (STDLTYEVKELGIITCFDVLKWEMLPN) the chain is on the extracellular side. The helical transmembrane segment at 186–206 (FAAWVAFLLTLFVVLFLIPFI) threads the bilayer. The Cytoplasmic segment spans residues 207–236 (VTVGCYIGTIRKLIQTSSRYGNKQKTRSIY). Residues 237–257 (LAIIVLSVFITCFAPNNFILL) traverse the membrane as a helical segment. Topologically, residues 258-271 (AHMIVRLFYEGSLY) are extracellular. A helical membrane pass occupies residues 272 to 294 (PAYKLTLCLSCLNNCIDPFIYYF). Residues 295–357 (ASKEFYQKFM…ICLQRQESVF (63 aa)) lie on the Cytoplasmic side of the membrane.

This sequence belongs to the G-protein coupled receptor 1 family.

It is found in the cell membrane. Its function is as follows. Probable receptor for purines coupled to G-proteins. The chain is P2Y purinoceptor 8 (P2RY8) from Gallus gallus (Chicken).